A 291-amino-acid chain; its full sequence is Elongation factor Ts (291 aa).

Positions 79-82 (TDFV) are involved in Mg(2+) ion dislocation from EF-Tu.

This sequence belongs to the EF-Ts family.

The protein resides in the cytoplasm. Associates with the EF-Tu.GDP complex and induces the exchange of GDP to GTP. It remains bound to the aminoacyl-tRNA.EF-Tu.GTP complex up to the GTP hydrolysis stage on the ribosome. The chain is Elongation factor Ts from Stenotrophomonas maltophilia (strain K279a).